Reading from the N-terminus, the 267-residue chain is Expansin-B10 (267 aa).

The N-terminal stretch at 1-22 is a signal peptide; it reads MASSCLLLACVVAAAMVSAVSC. N-linked (GlcNAc...) asparagine glycosylation occurs at N32. The Expansin-like EG45 domain occupies 61–167; sequence GGACGYKDID…RRVRCKYPGE (107 aa). Intrachain disulfides connect C64–C92, C95–C162, and C100–C106. The Expansin-like CBD domain occupies 181–262; that stretch reads NYFAVLVKYV…NWKANALYKS (82 aa). N-linked (GlcNAc...) asparagine glycosylation occurs at N213.

This sequence belongs to the expansin family. Expansin B subfamily.

The protein localises to the secreted. The protein resides in the cell wall. It localises to the membrane. Functionally, may cause loosening and extension of plant cell walls by disrupting non-covalent bonding between cellulose microfibrils and matrix glucans. No enzymatic activity has been found. May be required for rapid internodal elongation in deepwater rice during submergence. The chain is Expansin-B10 (EXPB10) from Oryza sativa subsp. japonica (Rice).